We begin with the raw amino-acid sequence, 407 residues long: Imidazolonepropionase (407 aa).

The Fe(3+) site is built by His68 and His70. The Zn(2+) site is built by His68 and His70. Arg77, Tyr140, and His173 together coordinate 4-imidazolone-5-propanoate. Tyr140 serves as a coordination point for N-formimidoyl-L-glutamate. Fe(3+) is bound at residue His238. His238 serves as a coordination point for Zn(2+). Gln241 is a binding site for 4-imidazolone-5-propanoate. Asp313 contributes to the Fe(3+) binding site. Asp313 is a Zn(2+) binding site. The N-formimidoyl-L-glutamate site is built by Asn315 and Gly317. Thr318 provides a ligand contact to 4-imidazolone-5-propanoate.

It belongs to the metallo-dependent hydrolases superfamily. HutI family. Zn(2+) serves as cofactor. Fe(3+) is required as a cofactor.

It is found in the cytoplasm. It catalyses the reaction 4-imidazolone-5-propanoate + H2O = N-formimidoyl-L-glutamate. The protein operates within amino-acid degradation; L-histidine degradation into L-glutamate; N-formimidoyl-L-glutamate from L-histidine: step 3/3. In terms of biological role, catalyzes the hydrolytic cleavage of the carbon-nitrogen bond in imidazolone-5-propanoate to yield N-formimidoyl-L-glutamate. It is the third step in the universal histidine degradation pathway. This chain is Imidazolonepropionase, found in Burkholderia ambifaria (strain ATCC BAA-244 / DSM 16087 / CCUG 44356 / LMG 19182 / AMMD) (Burkholderia cepacia (strain AMMD)).